The primary structure comprises 188 residues: Mediator of RNA polymerase II transcription subunit 29 (188 aa).

Residues 1–11 (MAMLLNQSQPP) are compositionally biased toward polar residues. The tract at residues 1-27 (MAMLLNQSQPPQGREGGGTQVGSLGPG) is disordered.

It belongs to the Mediator complex subunit 29 family. As to quaternary structure, component of the Mediator complex.

It localises to the nucleus. Component of the Mediator complex, a coactivator involved in the regulated transcription of nearly all RNA polymerase II-dependent genes. Mediator functions as a bridge to convey information from gene-specific regulatory proteins to the basal RNA polymerase II transcription machinery. Mediator is recruited to promoters by direct interactions with regulatory proteins and serves as a scaffold for the assembly of a functional preinitiation complex with RNA polymerase II and the general transcription factors. This Xenopus tropicalis (Western clawed frog) protein is Mediator of RNA polymerase II transcription subunit 29 (med29).